Here is a 263-residue protein sequence, read N- to C-terminus: Small ribosomal subunit protein uS15m (263 aa).

Residues 1-70 (MVLKSVFRST…VRQYARPSRK (70 aa)) constitute a mitochondrion transit peptide. The span at 238–251 (EREKQKAEEAERKK) shows a compositional bias: basic and acidic residues. The interval 238–263 (EREKQKAEEAERKKSSSSTNPQETAA) is disordered.

Belongs to the universal ribosomal protein uS15 family. Component of the mitochondrial ribosome small subunit (28S) which comprises a 12S rRNA and about 30 distinct proteins.

The protein resides in the mitochondrion. This chain is Small ribosomal subunit protein uS15m (mrps15), found in Danio rerio (Zebrafish).